The sequence spans 432 residues: Glutamyl-tRNA reductase (432 aa).

Substrate-binding positions include 49–52 (TCNR), Ser101, 106–108 (EPQ), and Gln112. The active-site Nucleophile is Cys50. 181–186 (GAGETI) contacts NADP(+). The interval 408–432 (PEKPGYRHPPVATPIVRTDDANPAP) is disordered.

Belongs to the glutamyl-tRNA reductase family. In terms of assembly, homodimer.

The enzyme catalyses (S)-4-amino-5-oxopentanoate + tRNA(Glu) + NADP(+) = L-glutamyl-tRNA(Glu) + NADPH + H(+). Its pathway is porphyrin-containing compound metabolism; protoporphyrin-IX biosynthesis; 5-aminolevulinate from L-glutamyl-tRNA(Glu): step 1/2. Its function is as follows. Catalyzes the NADPH-dependent reduction of glutamyl-tRNA(Glu) to glutamate 1-semialdehyde (GSA). The protein is Glutamyl-tRNA reductase of Xanthomonas campestris pv. campestris (strain 8004).